The following is a 1601-amino-acid chain: Ectopic P granules protein 5 (1601 aa).

The tract at residues 1–109 (MAELVRPKKP…EAPPIPARNL (109 aa)) is disordered. Positions 15–26 (RPQSDDAPRIPD) are enriched in basic and acidic residues.

This sequence belongs to the EPG5 family.

The protein localises to the cytoplasm. Involved in autophagy. Has a role in the degradation of protein aggregates within autophagosomes. Essential for starvation-induced autotrophy and omegasome development. The polypeptide is Ectopic P granules protein 5 (epg-5) (Caenorhabditis briggsae).